Here is a 426-residue protein sequence, read N- to C-terminus: Enolase (426 aa).

Glutamine 163 is a (2R)-2-phosphoglycerate binding site. Catalysis depends on glutamate 205, which acts as the Proton donor. Mg(2+) contacts are provided by aspartate 242, glutamate 283, and aspartate 310. Residues lysine 335, arginine 364, serine 365, and lysine 386 each coordinate (2R)-2-phosphoglycerate. Lysine 335 functions as the Proton acceptor in the catalytic mechanism.

This sequence belongs to the enolase family. Requires Mg(2+) as cofactor.

It is found in the cytoplasm. Its subcellular location is the secreted. It localises to the cell surface. The catalysed reaction is (2R)-2-phosphoglycerate = phosphoenolpyruvate + H2O. Its pathway is carbohydrate degradation; glycolysis; pyruvate from D-glyceraldehyde 3-phosphate: step 4/5. Catalyzes the reversible conversion of 2-phosphoglycerate (2-PG) into phosphoenolpyruvate (PEP). It is essential for the degradation of carbohydrates via glycolysis. The polypeptide is Enolase (Pseudarthrobacter chlorophenolicus (strain ATCC 700700 / DSM 12829 / CIP 107037 / JCM 12360 / KCTC 9906 / NCIMB 13794 / A6) (Arthrobacter chlorophenolicus)).